Consider the following 872-residue polypeptide: Alanine--tRNA ligase (872 aa).

The Zn(2+) site is built by His567, His571, Cys669, and His673.

It belongs to the class-II aminoacyl-tRNA synthetase family. The cofactor is Zn(2+).

The protein resides in the cytoplasm. The enzyme catalyses tRNA(Ala) + L-alanine + ATP = L-alanyl-tRNA(Ala) + AMP + diphosphate. Functionally, catalyzes the attachment of alanine to tRNA(Ala) in a two-step reaction: alanine is first activated by ATP to form Ala-AMP and then transferred to the acceptor end of tRNA(Ala). Also edits incorrectly charged Ser-tRNA(Ala) and Gly-tRNA(Ala) via its editing domain. In Streptococcus pneumoniae serotype 2 (strain D39 / NCTC 7466), this protein is Alanine--tRNA ligase.